Here is a 315-residue protein sequence, read N- to C-terminus: Probable HTH-type transcriptional regulator SinR (315 aa).

The region spanning Arg8–Thr65 is the HTH lysR-type domain. Positions Leu25–Ser44 form a DNA-binding region, H-T-H motif.

This sequence belongs to the LysR transcriptional regulatory family.

Its function is as follows. Probable regulatory protein. Its target is not known. The chain is Probable HTH-type transcriptional regulator SinR (sinR) from Salmonella typhimurium (strain LT2 / SGSC1412 / ATCC 700720).